The primary structure comprises 490 residues: Bifunctional NAD(P)H-hydrate repair enzyme Nnr (490 aa).

In terms of domain architecture, YjeF N-terminal spans 1 to 204 (MKEIDELTIK…NIGHPVHLIN (204 aa)). Positions 1 to 204 (MKEIDELTIK…NIGHPVHLIN (204 aa)) are NAD(P)H-hydrate epimerase. Residues 51-55 (NNGGD) are NADPHX 1; for epimerase activity. N52 and D114 together coordinate K(+). An NADPHX 1; for epimerase activity region spans residues 118–124 (GTGLRGE). Positions 129 and 147 each coordinate (6S)-NADPHX. S150 serves as a coordination point for K(+). Positions 212 to 488 (TREMVRSLLP…RLIPEAIRRL (277 aa)) constitute a YjeF C-terminal domain. Positions 212–490 (TREMVRSLLP…IPEAIRRLKE (279 aa)) are ADP-dependent (S)-NAD(P)H-hydrate dehydratase. G317 contacts (6S)-NADPHX. The segment at 366 to 372 (HPGEMAR) is NADPHX 2; for dehydratase activity. ADP contacts are provided by residues 402 to 406 (KSATT) and 421 to 430 (NTGLSKGGSG). D431 contacts (6S)-NADPHX.

It in the N-terminal section; belongs to the NnrE/AIBP family. The protein in the C-terminal section; belongs to the NnrD/CARKD family. It depends on K(+) as a cofactor.

The enzyme catalyses (6S)-NADHX + ADP = AMP + phosphate + NADH + H(+). It catalyses the reaction (6S)-NADPHX + ADP = AMP + phosphate + NADPH + H(+). It carries out the reaction (6R)-NADHX = (6S)-NADHX. The catalysed reaction is (6R)-NADPHX = (6S)-NADPHX. Functionally, bifunctional enzyme that catalyzes the epimerization of the S- and R-forms of NAD(P)HX and the dehydration of the S-form of NAD(P)HX at the expense of ADP, which is converted to AMP. This allows the repair of both epimers of NAD(P)HX, a damaged form of NAD(P)H that is a result of enzymatic or heat-dependent hydration. The sequence is that of Bifunctional NAD(P)H-hydrate repair enzyme Nnr (nnr) from Thermotoga maritima (strain ATCC 43589 / DSM 3109 / JCM 10099 / NBRC 100826 / MSB8).